A 253-amino-acid chain; its full sequence is Ubiquinone/menaquinone biosynthesis C-methyltransferase UbiE (253 aa).

S-adenosyl-L-methionine contacts are provided by residues Thr76, Asp97, and Asn125–Ala126.

The protein belongs to the class I-like SAM-binding methyltransferase superfamily. MenG/UbiE family.

The catalysed reaction is a 2-demethylmenaquinol + S-adenosyl-L-methionine = a menaquinol + S-adenosyl-L-homocysteine + H(+). The enzyme catalyses a 2-methoxy-6-(all-trans-polyprenyl)benzene-1,4-diol + S-adenosyl-L-methionine = a 5-methoxy-2-methyl-3-(all-trans-polyprenyl)benzene-1,4-diol + S-adenosyl-L-homocysteine + H(+). It functions in the pathway quinol/quinone metabolism; menaquinone biosynthesis; menaquinol from 1,4-dihydroxy-2-naphthoate: step 2/2. The protein operates within cofactor biosynthesis; ubiquinone biosynthesis. Methyltransferase required for the conversion of demethylmenaquinol (DMKH2) to menaquinol (MKH2) and the conversion of 2-polyprenyl-6-methoxy-1,4-benzoquinol (DDMQH2) to 2-polyprenyl-3-methyl-6-methoxy-1,4-benzoquinol (DMQH2). This Bradyrhizobium diazoefficiens (strain JCM 10833 / BCRC 13528 / IAM 13628 / NBRC 14792 / USDA 110) protein is Ubiquinone/menaquinone biosynthesis C-methyltransferase UbiE.